A 367-amino-acid polypeptide reads, in one-letter code: MGSLASERKVVGWAARDATGHLSPYSYTLRNTGPEDVVVKVLYCGICHTDIHQAKNHLGASKYPMVPGHEVVGEVVEVGPEVAKYGVGDVVGVGVIVGCCRECSPCKANVEQYCNKKIWSYNDVYTDGRPTQGGFASTMVVDQKFVVKIPAGLAPEQAAPLLCAGVTVYSPLKHFGLTNPGLRGGILGLGGVGHMGVKVAKAMGHHVTVISSSSKKRAEAMDHLGADAYLVSSDAAAMAAAADSLDYIIDTVPVHHPLEPYLALLKLDGKLVLLGVIGEPLSFVSPMVMLGRKAITGSFIGSIDETAEVLQFCVDKGLTSQIEVVKMGYVNEALERLERNDVRYRFVVDVAGSNVEAEAAAADAASN.

C47 serves as a coordination point for Zn(2+). T49 lines the NADP(+) pocket. Positions 69, 70, 100, 103, 106, 114, and 163 each coordinate Zn(2+). Residues T167, 188 to 193 (GLGGVG), 211 to 216 (SSSSKK), T251, G275, and 298 to 300 (SFI) contribute to the NADP(+) site.

This sequence belongs to the zinc-containing alcohol dehydrogenase family. As to quaternary structure, homodimer. Requires Zn(2+) as cofactor.

The enzyme catalyses (E)-cinnamyl alcohol + NADP(+) = (E)-cinnamaldehyde + NADPH + H(+). It carries out the reaction (E)-coniferol + NADP(+) = (E)-coniferaldehyde + NADPH + H(+). It catalyses the reaction (E)-sinapyl alcohol + NADP(+) = (E)-sinapaldehyde + NADPH + H(+). The catalysed reaction is (E)-4-coumaroyl alcohol + NADP(+) = (E)-4-coumaraldehyde + NADPH + H(+). The enzyme catalyses (E)-caffeyl alcohol + NADP(+) = (E)-caffeyl aldehyde + NADPH + H(+). It functions in the pathway aromatic compound metabolism; phenylpropanoid biosynthesis. In terms of biological role, involved in lignin biosynthesis. May catalyze the final step specific for the production of lignin monomers, like coniferyl alcohol, sinapyl alcohol and 4-coumaryl alcohol. This Zea mays (Maize) protein is Probable cinnamyl alcohol dehydrogenase.